The sequence spans 412 residues: CinA-like protein (412 aa).

It belongs to the CinA family.

This Kosmotoga olearia (strain ATCC BAA-1733 / DSM 21960 / TBF 19.5.1) protein is CinA-like protein.